We begin with the raw amino-acid sequence, 1178 residues long: Pyruvate carboxylase 1 (1178 aa).

Residues 18–470 form the Biotin carboxylation domain; it reads EKNKILVANR…WTTFIDDTPQ (453 aa). The ATP site is built by Lys136, Glu220, and His255. The 198-residue stretch at 140-337 folds into the ATP-grasp domain; sequence RNLAAKANVP…IVAAQIQIAA (198 aa). Arg312 is a catalytic residue. Residues 557-824 enclose the Pyruvate carboxyltransferase domain; that stretch reads TLLMDTTWRD…DTGINVEHVR (268 aa). Residues 565-569 and Arg638 contribute to the substrate site; that span reads RDAHQ. Asp566 serves as a coordination point for a divalent metal cation. Residues Lys734, His764, and His766 each coordinate a divalent metal cation. Lys734 is subject to N6-carboxylysine. Position 898 (Thr898) interacts with substrate. One can recognise a Biotinyl-binding domain in the interval 1094–1169; it reads KADMHDPLHI…DSSDLLVLLE (76 aa). Lys1135 bears the N6-biotinyllysine mark.

Homotetramer. It depends on biotin as a cofactor. Requires Zn(2+) as cofactor.

The protein resides in the cytoplasm. It catalyses the reaction hydrogencarbonate + pyruvate + ATP = oxaloacetate + ADP + phosphate + H(+). It functions in the pathway carbohydrate biosynthesis; gluconeogenesis. Pyruvate carboxylase catalyzes a 2-step reaction, involving the ATP-dependent carboxylation of the covalently attached biotin in the first step and the transfer of the carboxyl group to pyruvate in the second. In Saccharomyces cerevisiae (strain ATCC 204508 / S288c) (Baker's yeast), this protein is Pyruvate carboxylase 1 (PYC1).